The sequence spans 720 residues: Polyribonucleotide nucleotidyltransferase (720 aa).

2 residues coordinate Mg(2+): Asp-484 and Asp-490. The KH domain occupies 551–610 (PRMYKINIDPSKIGSVIGSGGKTIRSIIEQTNTTVDIENDGTVVIGATDEASAKKAIKII). Residues 620-688 (GSIYTGKVTR…NQGRVNLSHR (69 aa)) form the S1 motif domain. The tract at residues 697–720 (PISRNRDSQPRRPGPFRPSDRSNS) is disordered.

This sequence belongs to the polyribonucleotide nucleotidyltransferase family. Mg(2+) is required as a cofactor.

The protein resides in the cytoplasm. It catalyses the reaction RNA(n+1) + phosphate = RNA(n) + a ribonucleoside 5'-diphosphate. Its function is as follows. Involved in mRNA degradation. Catalyzes the phosphorolysis of single-stranded polyribonucleotides processively in the 3'- to 5'-direction. The sequence is that of Polyribonucleotide nucleotidyltransferase from Dehalococcoides mccartyi (strain CBDB1).